Consider the following 212-residue polypeptide: Ribosomal RNA small subunit methyltransferase G (212 aa).

Residues Phe78, 96–98, 124–125, and Arg141 contribute to the S-adenosyl-L-methionine site; these read ESS and VE.

Belongs to the methyltransferase superfamily. RNA methyltransferase RsmG family.

The protein resides in the cytoplasm. Its function is as follows. Specifically methylates the N7 position of a guanine in 16S rRNA. This is Ribosomal RNA small subunit methyltransferase G from Onion yellows phytoplasma (strain OY-M).